The primary structure comprises 90 residues: MANSKQAKKRIIQAERNRQHNVARRSMMRTFLKKTAYAIEKGDVEAAKENFAKVVPILDKYASKGLIHKNKAARHKSRLSAKIKALATAA.

This sequence belongs to the bacterial ribosomal protein bS20 family.

Its function is as follows. Binds directly to 16S ribosomal RNA. The protein is Small ribosomal subunit protein bS20 of Francisella tularensis subsp. tularensis (strain FSC 198).